Reading from the N-terminus, the 196-residue chain is Superantigen-like protein 11 (196 aa).

Residues 65–167 (LDVFVVREGS…RVTMKNGDFY (103 aa)) form a sialyl Lewis X-binding region.

It belongs to the staphylococcal/streptococcal toxin family. In terms of assembly, homodimer (via its C-terminal domain). Interacts with host FCAR and SELPLG (via sialyl Lewis X).

The protein resides in the secreted. Its function is as follows. Secreted protein that plays a role in the inhibition of host immune system. Targets myeloid cells such as monocytes or granulocytes through binding with sialyllactosamine-containing glycoproteins. Prevents initial rolling of neutrophils toward the site of infection by interacting with host SELPLG. Disrupts neutrophil motility by induction of cell adhesion via interacting with glycans but independently of SELPLG. This is Superantigen-like protein 11 from Staphylococcus aureus.